Here is a 191-residue protein sequence, read N- to C-terminus: Large ribosomal subunit protein eL6 (191 aa).

Belongs to the eukaryotic ribosomal protein eL6 family.

The polypeptide is Large ribosomal subunit protein eL6 (RPL6) (Tetrahymena thermophila (strain SB210)).